The following is a 100-amino-acid chain: Osteocalcin (100 aa).

The N-terminal stretch at 1 to 23 (MRALTLLALLALAALCITGQAGA) is a signal peptide. Residues 24 to 51 (KPSGADSSKGAAFVSKQEGSEVVKRPRR) constitute a propeptide that is removed on maturation. The Gla domain occupies 52–98 (YLYQWLGAPVPYPDPLEPKREVCELNPDCDELADHIGFQEAYRRFYG). Ca(2+) is bound by residues Glu-68, Glu-72, Glu-75, and Asp-81. A 4-carboxyglutamate mark is found at Glu-68, Glu-72, and Glu-75. Cys-74 and Cys-80 are oxidised to a cystine.

Belongs to the osteocalcin/matrix Gla protein family. Post-translationally, gamma-carboxyglutamate residues are formed by vitamin K dependent carboxylation by GGCX. These residues are essential for the binding of calcium. Decarboxylation promotes the hormone activity.

It is found in the secreted. Functionally, the carboxylated form is one of the main organic components of the bone matrix, which constitutes 1-2% of the total bone protein: it acts as a negative regulator of bone formation and is required to limit bone formation without impairing bone resorption or mineralization. The carboxylated form binds strongly to apatite and calcium. In terms of biological role, the uncarboxylated form acts as a hormone secreted by osteoblasts, which regulates different cellular processes, such as energy metabolism, male fertility and brain development. Regulates of energy metabolism by acting as a hormone favoring pancreatic beta-cell proliferation, insulin secretion and sensitivity and energy expenditure. Uncarboxylated osteocalcin hormone also promotes testosterone production in the testes: acts as a ligand for G protein-coupled receptor GPRC6A at the surface of Leydig cells, initiating a signaling response that promotes the expression of enzymes required for testosterone synthesis in a CREB-dependent manner. Also acts as a regulator of brain development: osteocalcin hormone crosses the blood-brain barrier and acts as a ligand for GPR158 on neurons, initiating a signaling response that prevents neuronal apoptosis in the hippocampus, favors the synthesis of all monoamine neurotransmitters and inhibits that of gamma-aminobutyric acid (GABA). Osteocalcin also crosses the placenta during pregnancy and maternal osteocalcin is required for fetal brain development. The chain is Osteocalcin from Pongo pygmaeus (Bornean orangutan).